The sequence spans 391 residues: Elongation factor Tu (391 aa).

The tr-type G domain maps to 10-201 (KPHVNIGTIG…AVDAYIPTPE (192 aa)). Positions 19-26 (GHVDHGKT) are G1. 19–26 (GHVDHGKT) provides a ligand contact to GTP. T26 provides a ligand contact to Mg(2+). Residues 55–59 (GITIS) form a G2 region. The interval 76–79 (DCPG) is G3. GTP contacts are provided by residues 76–80 (DCPGH) and 131–134 (NKVD). The segment at 131–134 (NKVD) is G4. Residues 169–171 (SAL) form a G5 region.

The protein belongs to the TRAFAC class translation factor GTPase superfamily. Classic translation factor GTPase family. EF-Tu/EF-1A subfamily. In terms of assembly, monomer.

Its subcellular location is the cytoplasm. The enzyme catalyses GTP + H2O = GDP + phosphate + H(+). Its function is as follows. GTP hydrolase that promotes the GTP-dependent binding of aminoacyl-tRNA to the A-site of ribosomes during protein biosynthesis. In Rhizobium meliloti (strain 1021) (Ensifer meliloti), this protein is Elongation factor Tu.